The chain runs to 148 residues: Small ribosomal subunit protein bS6 (148 aa).

The disordered stretch occupies residues 97-148; sequence EEGPSAMLQRRDDRERGDRGDRGPRRDFDDRGPRRPREDDRPRRSREDEGDE.

The protein belongs to the bacterial ribosomal protein bS6 family.

Functionally, binds together with bS18 to 16S ribosomal RNA. The sequence is that of Small ribosomal subunit protein bS6 from Chelativorans sp. (strain BNC1).